A 277-amino-acid chain; its full sequence is Caspase-3 (277 aa).

An N-acetylmethionine modification is found at M1. 2 propeptides span residues 1–9 and 10–28; these read MENTENSVD and SKSIKNLEPKIIHGSESMD. Position 11 is an N6-acetyllysine (K11). S26 carries the post-translational modification Phosphoserine. Residues H121 and C163 contribute to the active site. At C163 the chain carries S-nitrosocysteine; in inhibited form. R207 bears the (Microbial infection) ADP-riboxanated arginine mark.

Belongs to the peptidase C14A family. As to quaternary structure, heterotetramer that consists of two anti-parallel arranged heterodimers, each one formed by a 17 kDa (p17) and a 12 kDa (p12) subunit. Interacts with BIRC6/bruce. Post-translationally, cleavage by granzyme B, caspase-6, caspase-8 and caspase-10 generates the two active subunits. Additional processing of the propeptides is likely due to the autocatalytic activity of the activated protease. Active heterodimers between the small subunit of caspase-7 protease and the large subunit of caspase-3 also occur and vice versa. In terms of processing, S-nitrosylated on its catalytic site cysteine in unstimulated human cell lines and denitrosylated upon activation of the Fas apoptotic pathway, associated with an increase in intracellular caspase activity. Fas therefore activates caspase-3 not only by inducing the cleavage of the caspase zymogen to its active subunits, but also by stimulating the denitrosylation of its active site thiol. Ubiquitinated by BIRC6; this activity is inhibited by DIABLO/SMAC. Post-translationally, (Microbial infection) ADP-riboxanation by C.violaceum CopC blocks CASP3 processing, preventing CASP3 activation and ability to recognize and cleave substrates. As to expression, highly expressed in lung, spleen, heart, liver and kidney. Moderate levels in brain and skeletal muscle, and low in testis. Also found in many cell lines, highest expression in cells of the immune system.

The protein localises to the cytoplasm. It catalyses the reaction Strict requirement for an Asp residue at positions P1 and P4. It has a preferred cleavage sequence of Asp-Xaa-Xaa-Asp-|- with a hydrophobic amino-acid residue at P2 and a hydrophilic amino-acid residue at P3, although Val or Ala are also accepted at this position.. Inhibited by isatin sulfonamides. Inhibited by BIRC6; following inhibition of BIRC6-caspase binding by DIABLO/SMAC, BIRC6 is subjected to caspase cleavage, leading to an increase in active caspases. Functionally, thiol protease that acts as a major effector caspase involved in the execution phase of apoptosis. Following cleavage and activation by initiator caspases (CASP8, CASP9 and/or CASP10), mediates execution of apoptosis by catalyzing cleavage of many proteins. At the onset of apoptosis, it proteolytically cleaves poly(ADP-ribose) polymerase PARP1 at a '216-Asp-|-Gly-217' bond. Cleaves and activates sterol regulatory element binding proteins (SREBPs) between the basic helix-loop-helix leucine zipper domain and the membrane attachment domain. Cleaves and activates caspase-6, -7 and -9 (CASP6, CASP7 and CASP9, respectively). Cleaves and inactivates interleukin-18 (IL18). Involved in the cleavage of huntingtin. Triggers cell adhesion in sympathetic neurons through RET cleavage. Cleaves and inhibits serine/threonine-protein kinase AKT1 in response to oxidative stress. Acts as an inhibitor of type I interferon production during virus-induced apoptosis by mediating cleavage of antiviral proteins CGAS, IRF3 and MAVS, thereby preventing cytokine overproduction. Also involved in pyroptosis by mediating cleavage and activation of gasdermin-E (GSDME). Cleaves XRCC4 and phospholipid scramblase proteins XKR4, XKR8 and XKR9, leading to promote phosphatidylserine exposure on apoptotic cell surface. Cleaves BIRC6 following inhibition of BIRC6-caspase binding by DIABLO/SMAC. The protein is Caspase-3 (CASP3) of Homo sapiens (Human).